Reading from the N-terminus, the 317-residue chain is Transaldolase (317 aa).

The Schiff-base intermediate with substrate role is filled by lysine 132.

The protein belongs to the transaldolase family. Type 1 subfamily. As to quaternary structure, homodimer.

It is found in the cytoplasm. The enzyme catalyses D-sedoheptulose 7-phosphate + D-glyceraldehyde 3-phosphate = D-erythrose 4-phosphate + beta-D-fructose 6-phosphate. The protein operates within carbohydrate degradation; pentose phosphate pathway; D-glyceraldehyde 3-phosphate and beta-D-fructose 6-phosphate from D-ribose 5-phosphate and D-xylulose 5-phosphate (non-oxidative stage): step 2/3. Functionally, transaldolase is important for the balance of metabolites in the pentose-phosphate pathway. In Yersinia pseudotuberculosis serotype O:3 (strain YPIII), this protein is Transaldolase.